Here is a 729-residue protein sequence, read N- to C-terminus: Methionine--tRNA ligase (729 aa).

The short motif at 12–22 (PYVNNIPHLGN) is the 'HIGH' region element. 4 residues coordinate Zn(2+): cysteine 143, cysteine 146, cysteine 155, and cysteine 158. Positions 330–334 (KFSKS) match the 'KMSKS' region motif. Residue lysine 333 coordinates ATP. The region spanning 565–670 (FSEQVCLKVV…DNPIPGERII (106 aa)) is the tRNA-binding domain.

The protein belongs to the class-I aminoacyl-tRNA synthetase family. MetG type 1 subfamily. As to quaternary structure, homodimer. The cofactor is Zn(2+).

It is found in the cytoplasm. The enzyme catalyses tRNA(Met) + L-methionine + ATP = L-methionyl-tRNA(Met) + AMP + diphosphate. Functionally, is required not only for elongation of protein synthesis but also for the initiation of all mRNA translation through initiator tRNA(fMet) aminoacylation. This Borrelia hermsii (strain HS1 / DAH) protein is Methionine--tRNA ligase.